The primary structure comprises 249 residues: Triosephosphate isomerase (249 aa).

Residue 9 to 11 (NWK) coordinates substrate. H95 acts as the Electrophile in catalysis. E166 functions as the Proton acceptor in the catalytic mechanism. Residues G172, S211, and 232-233 (GG) each bind substrate.

The protein belongs to the triosephosphate isomerase family. As to quaternary structure, homodimer.

The protein resides in the cytoplasm. It catalyses the reaction D-glyceraldehyde 3-phosphate = dihydroxyacetone phosphate. It participates in carbohydrate biosynthesis; gluconeogenesis. It functions in the pathway carbohydrate degradation; glycolysis; D-glyceraldehyde 3-phosphate from glycerone phosphate: step 1/1. Functionally, involved in the gluconeogenesis. Catalyzes stereospecifically the conversion of dihydroxyacetone phosphate (DHAP) to D-glyceraldehyde-3-phosphate (G3P). The chain is Triosephosphate isomerase from Legionella pneumophila (strain Paris).